A 636-amino-acid chain; its full sequence is Probable potassium transport system protein Kup (636 aa).

The next 12 membrane-spanning stretches (helical) occupy residues 22–42 (MGLL…SPLY), 64–84 (ILSL…VMFI), 114–134 (ALMV…SMIT), 150–170 (FEGI…ALFL), 182–202 (LFGP…VHGI), 220–240 (FFIV…LALT), 261–281 (WFAL…AILL), 293–313 (LLAP…ATVI), 351–371 (IYIG…VIGF), 383–403 (VAVT…MLLL), 408–428 (PVLA…FFAA), and 433–453 (IVQG…LMST).

It belongs to the HAK/KUP transporter (TC 2.A.72) family.

Its subcellular location is the cell inner membrane. It carries out the reaction K(+)(in) + H(+)(in) = K(+)(out) + H(+)(out). Transport of potassium into the cell. Likely operates as a K(+):H(+) symporter. This Pseudomonas entomophila (strain L48) protein is Probable potassium transport system protein Kup.